A 226-amino-acid polypeptide reads, in one-letter code: Cytidylate kinase (226 aa).

12-20 is a binding site for ATP; the sequence is GPSGAGKGT.

The protein belongs to the cytidylate kinase family. Type 1 subfamily.

Its subcellular location is the cytoplasm. The catalysed reaction is CMP + ATP = CDP + ADP. It carries out the reaction dCMP + ATP = dCDP + ADP. In Xanthomonas campestris pv. campestris (strain 8004), this protein is Cytidylate kinase.